The sequence spans 253 residues: 2-C-methyl-D-erythritol 4-phosphate cytidylyltransferase (253 aa).

It belongs to the IspD/TarI cytidylyltransferase family. IspD subfamily.

It catalyses the reaction 2-C-methyl-D-erythritol 4-phosphate + CTP + H(+) = 4-CDP-2-C-methyl-D-erythritol + diphosphate. The protein operates within isoprenoid biosynthesis; isopentenyl diphosphate biosynthesis via DXP pathway; isopentenyl diphosphate from 1-deoxy-D-xylulose 5-phosphate: step 2/6. Its function is as follows. Catalyzes the formation of 4-diphosphocytidyl-2-C-methyl-D-erythritol from CTP and 2-C-methyl-D-erythritol 4-phosphate (MEP). This is 2-C-methyl-D-erythritol 4-phosphate cytidylyltransferase from Idiomarina loihiensis (strain ATCC BAA-735 / DSM 15497 / L2-TR).